We begin with the raw amino-acid sequence, 70 residues long: Putative membrane protein insertion efficiency factor (70 aa).

It belongs to the UPF0161 family.

It localises to the cell inner membrane. Could be involved in insertion of integral membrane proteins into the membrane. This chain is Putative membrane protein insertion efficiency factor, found in Sphingopyxis alaskensis (strain DSM 13593 / LMG 18877 / RB2256) (Sphingomonas alaskensis).